A 166-amino-acid polypeptide reads, in one-letter code: MAHIEKQAGELQEKLIAVNRVSKTVKGGRIFSFTALTVVGDGNGRVGFGYGKAREVPAAIQKAMEKARRNMMNVALNNGTLQHPVKGAHTGSRVFMQPASEGTGIIAGGAMRAVLEVAGVHNVLAKAYGSTNPINVVRATIDGLANMKSPEMVAAKRGKSVEEILG.

The region spanning 11-74 (LQEKLIAVNR…EKARRNMMNV (64 aa)) is the S5 DRBM domain.

This sequence belongs to the universal ribosomal protein uS5 family. As to quaternary structure, part of the 30S ribosomal subunit. Contacts proteins S4 and S8.

Functionally, with S4 and S12 plays an important role in translational accuracy. Located at the back of the 30S subunit body where it stabilizes the conformation of the head with respect to the body. This is Small ribosomal subunit protein uS5 from Pectobacterium atrosepticum (strain SCRI 1043 / ATCC BAA-672) (Erwinia carotovora subsp. atroseptica).